The primary structure comprises 428 residues: Aspartate--tRNA(Asp) ligase (428 aa).

Residue Glu-166 coordinates L-aspartate. An aspartate region spans residues 188–191; sequence QLYK. An L-aspartate-binding site is contributed by Arg-210. ATP is bound by residues 210–212, 218–220, and Glu-351; these read RAE and RHL. Mg(2+) contacts are provided by Glu-351 and Ser-354. The L-aspartate site is built by Ser-354 and Arg-358. ATP is bound at residue 399-402; it reads GLER.

The protein belongs to the class-II aminoacyl-tRNA synthetase family. Type 2 subfamily. Homodimer. Mg(2+) is required as a cofactor.

Its subcellular location is the cytoplasm. It catalyses the reaction tRNA(Asp) + L-aspartate + ATP = L-aspartyl-tRNA(Asp) + AMP + diphosphate. In terms of biological role, catalyzes the attachment of L-aspartate to tRNA(Asp) in a two-step reaction: L-aspartate is first activated by ATP to form Asp-AMP and then transferred to the acceptor end of tRNA(Asp). This chain is Aspartate--tRNA(Asp) ligase, found in Thermoplasma volcanium (strain ATCC 51530 / DSM 4299 / JCM 9571 / NBRC 15438 / GSS1).